A 396-amino-acid chain; its full sequence is Gap junction gamma-1 protein (396 aa).

Residues 1–18 (MSWSFLTRLLEEIHNHST) lie on the Cytoplasmic side of the membrane. Residues 19–39 (FVGKIWLTVLIVFRIVLTAVG) form a helical membrane-spanning segment. The Extracellular portion of the chain corresponds to 40–75 (GESIYYDEQSKFVCNTEQPGCENVCYDAFAPLSHVR). Residues 76–96 (FWVFQIILVATPSVMYLGYAI) form a helical membrane-spanning segment. Over 97–175 (HKIAKMEHGE…RRIREDGLMK (79 aa)) the chain is Cytoplasmic. The interval 145 to 165 (ELESEKENKEQSQPKPKHDGR) is disordered. Basic and acidic residues predominate over residues 147–156 (ESEKENKEQS). The chain crosses the membrane as a helical span at residues 176-198 (IYVLQLLARTVFEVGFLIGQYFL). The Extracellular portion of the chain corresponds to 199-229 (YGFQVHPFYVCSRLPCPHKIDCFISRPTEKT). Residues 230–250 (IFLLIMYGVTGLCLLLNIWEM) traverse the membrane as a helical segment. Residues 251–396 (LHLGFGTIRD…SGDGKTSVWI (146 aa)) lie on the Cytoplasmic side of the membrane. A coiled-coil region spans residues 303-358 (ELSNAKIAYKQNKANIAQEQQYGSHEEHLPADLETLQREIRMAQERLDLAIQAYHH). The segment at 357-396 (HHQNNPHGPREKKAKVGSKSGSNKSSISSKSGDGKTSVWI) is disordered. Residues 373–396 (GSKSGSNKSSISSKSGDGKTSVWI) show a composition bias toward low complexity.

The protein belongs to the connexin family. Gamma-type subfamily. As to quaternary structure, a connexon is composed of a hexamer of connexins. Interacts with CNST.

The protein resides in the cell membrane. Its subcellular location is the cell junction. It localises to the gap junction. Its function is as follows. One gap junction consists of a cluster of closely packed pairs of transmembrane channels, the connexons, through which materials of low MW diffuse from one cell to a neighboring cell. This Cricetulus griseus (Chinese hamster) protein is Gap junction gamma-1 protein (GJC1).